Here is a 1091-residue protein sequence, read N- to C-terminus: ATP-citrate synthase (1091 aa).

Residues 4-265 (KAISEQTGKE…LDAKSGASLK (262 aa)) enclose the ATP-grasp domain. ATP-binding residues include lysine 58, arginine 66, glycine 67, proline 109, valine 111, and glutamate 118. At tyrosine 131 the chain carries Phosphotyrosine. Aspartate 216 lines the ATP pocket. Mg(2+) is bound by residues aspartate 257, serine 260, and alanine 262. Phosphoserine is present on serine 263. Residues glycine 309, asparagine 346, threonine 348, tyrosine 364, and arginine 379 each coordinate citrate. Positions 442–457 (SGSTSTPAPSRTASFS) are enriched in low complexity. The disordered stretch occupies residues 442–471 (SGSTSTPAPSRTASFSESRTDEVAPAKKAK). Threonine 447 bears the Phosphothreonine mark. Serine 451 carries the post-translational modification Phosphoserine. A Phosphoserine; by PKA and PKB/AKT1 or PKB/AKT2 or BCKDK modification is found at serine 455. Phosphoserine is present on serine 459. 3 positions are modified to N6-acetyllysine; alternate: lysine 530, lysine 536, and lysine 544. Glycyl lysine isopeptide (Lys-Gly) (interchain with G-Cter in ubiquitin); alternate cross-links involve residues lysine 530, lysine 536, and lysine 544. Threonine 629 bears the Phosphothreonine mark. Serine 653 carries the phosphoserine modification. Tyrosine 672 bears the Phosphotyrosine mark. The active-site Tele-phosphohistidine intermediate is histidine 750. 769 to 779 (LKEAGVFVPRS) serves as a coordination point for CoA. Serine 829 carries the post-translational modification Phosphoserine. N6-acetyllysine occurs at positions 938, 958, 968, and 1067. A Phosphoserine modification is found at serine 1090.

In the N-terminal section; belongs to the succinate/malate CoA ligase beta subunit family. This sequence in the C-terminal section; belongs to the succinate/malate CoA ligase alpha subunit family. As to quaternary structure, homotetramer. Mg(2+) is required as a cofactor. Phosphorylated by PKA and GSK3 in a sequential manner; phosphorylation results in activation of its activity. Phosphorylation on Thr-447 and Ser-451 depends on the phosphorylation state of Ser-455. Phosphorylation on Ser-455 is decreased by prior phosphorylation on the other 2 residues. Phosphorylated at Ser-455 by BCKDK and dephosphorylated by protein phosphatase PPM1K. Post-translationally, ISGylated. In terms of processing, acetylated at Lys-530, Lys-536 and Lys-544 by KAT2B/PCAF. Acetylation is promoted by glucose and stabilizes the protein, probably by preventing ubiquitination at the same sites. Acetylation promotes de novo lipid synthesis. Deacetylated by SIRT2. Ubiquitinated at Lys-530, Lys-536 and Lys-544 by the BCR(KLHL25) E3 ubiquitin ligase complex and UBR4, leading to its degradation. Ubiquitination is probably inhibited by acetylation at same site. BCR(KLHL25)-mediated degradation of ACLY promotes fatty acid oxidation and is required for differentiation of inducible regulatory T (iTreg) cells.

Its subcellular location is the cytoplasm. The protein localises to the cytosol. The enzyme catalyses oxaloacetate + acetyl-CoA + ADP + phosphate = citrate + ATP + CoA. With respect to regulation, phosphorylation results in activation of its activity. Glucose 6-phosphate, fructose 6-phosphate, fructose 2,6-bisphosphate, ribulose 5-phosphate, and fructose 1,6-bisphosphate also act as activators. In terms of biological role, catalyzes the cleavage of citrate into oxaloacetate and acetyl-CoA, the latter serving as common substrate in multiple biochemical reactions in protein, carbohydrate and lipid metabolism. This chain is ATP-citrate synthase (ACLY), found in Bos taurus (Bovine).